The sequence spans 971 residues: Outer capsid protein VP2 (971 aa).

This sequence belongs to the orbivirus VP2 family.

It is found in the virion. Its function is as follows. The VP2 protein is one of the two proteins (with VP5) which constitute the virus particle outer capsid. It is the major target of the host immunogenic response. The sequence is that of Outer capsid protein VP2 (Segment-2) from Epizootic hemorrhagic disease virus 1 (EHDV-1).